Reading from the N-terminus, the 155-residue chain is Myosin light chain alkali (155 aa).

2 EF-hand domains span residues 7–41 (REVENVEFVFEVMGSPGEGIDAVDLGDALRALNLN) and 80–115 (GCYEDFIECLKLYDKEENGTMLLAELQHALLALGES).

As to quaternary structure, myosin is a hexamer of 2 heavy chains and 4 light chains. As to expression, indirect flight muscle isoform is found only in the indirect flight muscles. The larval and adult isoform is present in the larval and adult musculature.

The polypeptide is Myosin light chain alkali (Mlc1) (Drosophila melanogaster (Fruit fly)).